The chain runs to 115 residues: Large ribosomal subunit protein bL19 (115 aa).

Belongs to the bacterial ribosomal protein bL19 family.

In terms of biological role, this protein is located at the 30S-50S ribosomal subunit interface and may play a role in the structure and function of the aminoacyl-tRNA binding site. In Klebsiella pneumoniae (strain 342), this protein is Large ribosomal subunit protein bL19.